The primary structure comprises 552 residues: Chaperonin GroEL (552 aa).

ATP is bound by residues 30 to 33 (TLGP), lysine 51, 87 to 91 (DGTTT), glycine 415, 479 to 481 (NAA), and aspartate 495.

This sequence belongs to the chaperonin (HSP60) family. Forms a cylinder of 14 subunits composed of two heptameric rings stacked back-to-back. Interacts with the co-chaperonin GroES.

It is found in the cytoplasm. The enzyme catalyses ATP + H2O + a folded polypeptide = ADP + phosphate + an unfolded polypeptide.. Together with its co-chaperonin GroES, plays an essential role in assisting protein folding. The GroEL-GroES system forms a nano-cage that allows encapsulation of the non-native substrate proteins and provides a physical environment optimized to promote and accelerate protein folding. This is Chaperonin GroEL from Stutzerimonas stutzeri (Pseudomonas stutzeri).